Consider the following 547-residue polypeptide: Probable bifunctional tRNA threonylcarbamoyladenosine biosynthesis protein (547 aa).

The kae1 stretch occupies residues Met1–Trp329. Positions 112, 116, and 133 each coordinate Fe cation. L-threonylcarbamoyladenylate contacts are provided by residues Tyr133–Gly137, Asp165, Gly178, Glu182, and Asn262. Asp290 contacts Fe cation. In terms of domain architecture, Protein kinase spans Gln346–Leu547. ATP contacts are provided by residues Ile352–Ile360 and Lys373. The active-site Proton acceptor; for kinase activity is Asp465.

This sequence in the N-terminal section; belongs to the KAE1 / TsaD family. The protein in the C-terminal section; belongs to the protein kinase superfamily. Tyr protein kinase family. BUD32 subfamily. Component of the KEOPS complex that consists of Kae1, Bud32, Cgi121 and Pcc1; the whole complex dimerizes. It depends on Fe(2+) as a cofactor.

It localises to the cytoplasm. The catalysed reaction is L-seryl-[protein] + ATP = O-phospho-L-seryl-[protein] + ADP + H(+). It catalyses the reaction L-threonyl-[protein] + ATP = O-phospho-L-threonyl-[protein] + ADP + H(+). The enzyme catalyses L-threonylcarbamoyladenylate + adenosine(37) in tRNA = N(6)-L-threonylcarbamoyladenosine(37) in tRNA + AMP + H(+). Required for the formation of a threonylcarbamoyl group on adenosine at position 37 (t(6)A37) in tRNAs that read codons beginning with adenine. Is a component of the KEOPS complex that is probably involved in the transfer of the threonylcarbamoyl moiety of threonylcarbamoyl-AMP (TC-AMP) to the N6 group of A37. The Kae1 domain likely plays a direct catalytic role in this reaction. The Bud32 domain probably displays kinase activity that regulates Kae1 function. The chain is Probable bifunctional tRNA threonylcarbamoyladenosine biosynthesis protein from Methanococcus vannielii (strain ATCC 35089 / DSM 1224 / JCM 13029 / OCM 148 / SB).